A 143-amino-acid chain; its full sequence is Large ribosomal subunit protein uL11 (143 aa).

Belongs to the universal ribosomal protein uL11 family. Part of the ribosomal stalk of the 50S ribosomal subunit. Interacts with L10 and the large rRNA to form the base of the stalk. L10 forms an elongated spine to which L12 dimers bind in a sequential fashion forming a multimeric L10(L12)X complex. One or more lysine residues are methylated.

Functionally, forms part of the ribosomal stalk which helps the ribosome interact with GTP-bound translation factors. The polypeptide is Large ribosomal subunit protein uL11 (Ralstonia pickettii (strain 12J)).